The chain runs to 141 residues: Large ribosomal subunit protein uL16 (141 aa).

It belongs to the universal ribosomal protein uL16 family. In terms of assembly, part of the 50S ribosomal subunit.

Its function is as follows. Binds 23S rRNA and is also seen to make contacts with the A and possibly P site tRNAs. The protein is Large ribosomal subunit protein uL16 of Campylobacter fetus subsp. fetus (strain 82-40).